Reading from the N-terminus, the 608-residue chain is UvrABC system protein C (608 aa).

In terms of domain architecture, GIY-YIG spans 13–91 (HDAGVYRMYD…IKTYQPRYNV (79 aa)). One can recognise a UVR domain in the interval 201–236 (QQVLEHLIHKMEQASLALDFEEAARIRDQIQAVRAV).

The protein belongs to the UvrC family. Interacts with UvrB in an incision complex.

The protein resides in the cytoplasm. Its function is as follows. The UvrABC repair system catalyzes the recognition and processing of DNA lesions. UvrC both incises the 5' and 3' sides of the lesion. The N-terminal half is responsible for the 3' incision and the C-terminal half is responsible for the 5' incision. The chain is UvrABC system protein C from Pasteurella multocida (strain Pm70).